The following is a 447-amino-acid chain: UPF0210 protein LSEI_0897 (447 aa).

It belongs to the UPF0210 family. Homodimer.

The chain is UPF0210 protein LSEI_0897 from Lacticaseibacillus paracasei (strain ATCC 334 / BCRC 17002 / CCUG 31169 / CIP 107868 / KCTC 3260 / NRRL B-441) (Lactobacillus paracasei).